Reading from the N-terminus, the 92-residue chain is Trp operon repressor homolog (92 aa).

Residues 56–79 (QREVASKLGVSITKITRGAANLQD) mediate DNA binding.

It belongs to the TrpR family. In terms of assembly, homodimer.

It localises to the cytoplasm. Functionally, this protein is an aporepressor. When complexed with L-tryptophan it binds the operator region of the trp operon and prevents the initiation of transcription. The chain is Trp operon repressor homolog from Xylella fastidiosa (strain M23).